A 548-amino-acid polypeptide reads, in one-letter code: Sesquiterpene synthase 12 (548 aa).

Residues Asp299, Asp303, Asp444, and Glu452 each coordinate Mg(2+). Positions Asp299–Asp303 match the DDXXD motif motif.

It belongs to the terpene synthase family. Tpsa subfamily. Requires Mg(2+) as cofactor. The cofactor is Mn(2+). In terms of tissue distribution, mostly expressed in leaves, to a lower extent in stems, trichomes, flowers and roots and, at low levels, in fruits.

It catalyses the reaction (2E,6E)-farnesyl diphosphate = alpha-humulene + diphosphate. The catalysed reaction is (2E,6E)-farnesyl diphosphate = (-)-(E)-beta-caryophyllene + diphosphate. It carries out the reaction (2Z,6Z)-farnesyl diphosphate = beta-bisabolene + diphosphate. The enzyme catalyses (2E)-geranyl diphosphate = terpinolene + diphosphate. It catalyses the reaction (2E)-geranyl diphosphate = limonene + diphosphate. The catalysed reaction is (2E)-geranyl diphosphate = beta-myrcene + diphosphate. It carries out the reaction (2E)-geranyl diphosphate = (E)-beta-ocimene + diphosphate. The enzyme catalyses (2Z,6Z)-farnesyl diphosphate = gamma-curcumene + diphosphate. It catalyses the reaction (2Z,6Z)-farnesyl diphosphate = (Z)-gamma-bisabolene + diphosphate. Its pathway is secondary metabolite biosynthesis; terpenoid biosynthesis. Its function is as follows. Sesquiterpene synthase involved in the biosynthesis of volatile compounds. Mediates the conversion of (2E,6E)-farnesyl diphosphate (FPP) into (1E,4E,8E)-alpha-humulene and (-)-(E)-beta-caryophyllene, and of (2Z,6Z)-farnesyl diphosphate ((ZZ)-FPP) into beta-bisabolene, gamma-curcumene and (Z)-gamma-bisabolene. Can act with a low efficiency as a monoterpene synthase with geranyl diphosphate (GPP) as substrate, thus producing beta-myrcene, (E)-beta-ocimene, limonene and terpinolene. The chain is Sesquiterpene synthase 12 from Solanum lycopersicum (Tomato).